The following is a 177-amino-acid chain: Adenine phosphoribosyltransferase (177 aa).

This sequence belongs to the purine/pyrimidine phosphoribosyltransferase family. In terms of assembly, homodimer.

The protein resides in the cytoplasm. It carries out the reaction AMP + diphosphate = 5-phospho-alpha-D-ribose 1-diphosphate + adenine. Its pathway is purine metabolism; AMP biosynthesis via salvage pathway; AMP from adenine: step 1/1. Its function is as follows. Catalyzes a salvage reaction resulting in the formation of AMP, that is energically less costly than de novo synthesis. In Mycobacteroides abscessus (strain ATCC 19977 / DSM 44196 / CCUG 20993 / CIP 104536 / JCM 13569 / NCTC 13031 / TMC 1543 / L948) (Mycobacterium abscessus), this protein is Adenine phosphoribosyltransferase.